The following is a 232-amino-acid chain: Orotidine 5'-phosphate decarboxylase (232 aa).

Substrate is bound by residues Asp-14, Lys-36, 63–72 (DLKFHDIPNT), Thr-122, Arg-183, Gln-192, Gly-212, and Arg-213. Lys-65 serves as the catalytic Proton donor.

It belongs to the OMP decarboxylase family. Type 1 subfamily. In terms of assembly, homodimer.

The catalysed reaction is orotidine 5'-phosphate + H(+) = UMP + CO2. It participates in pyrimidine metabolism; UMP biosynthesis via de novo pathway; UMP from orotate: step 2/2. Functionally, catalyzes the decarboxylation of orotidine 5'-monophosphate (OMP) to uridine 5'-monophosphate (UMP). This Psychrobacter arcticus (strain DSM 17307 / VKM B-2377 / 273-4) protein is Orotidine 5'-phosphate decarboxylase.